Here is an 859-residue protein sequence, read N- to C-terminus: DNA (cytosine-5)-methyltransferase 3B (859 aa).

The interaction with DNMT1 and DNMT3A stretch occupies residues 1–305 (MKGDSRHLNE…LATFNKLVSY (305 aa)). A disordered region spans residues 25–226 (GNFSDQSSDT…RDGDSTEYQD (202 aa)). The segment covering 85-94 (DRDDEVDDGN) has biased composition (acidic residues). Ser-96 is subject to Phosphoserine. A Glycyl lysine isopeptide (Lys-Gly) (interchain with G-Cter in SUMO2) cross-link involves residue Lys-102. Residues 103 to 114 (LTRETKDTRTRS) show a composition bias toward basic and acidic residues. Thr-112 carries the post-translational modification Phosphothreonine. Residue Ser-116 is modified to Phosphoserine. Positions 167–179 (SSSASTPWSSPAS) are enriched in low complexity. The span at 189–198 (KSVSTPSVDL) shows a compositional bias: polar residues. The span at 214–226 (AESRDGDSTEYQD) shows a compositional bias: basic and acidic residues. At Ser-216 the chain carries Phosphoserine. Residues 232–290 (IGDLVWGKIKGFSWWPAMVVSWKATSKRQAMPGMRWVQWFGDGKFSEISADKLVALGLF) enclose the PWWP domain. The segment at 348–429 (KPTGIEGLKP…ESRERMASEV (82 aa)) is disordered. Basic and acidic residues-rich tracts occupy residues 370–381 (RRSDSRNLEPRR) and 412–426 (GKDRGEDEESRERMA). Arg-415 is subject to Citrulline. The 133-residue stretch at 428–560 (EVTNNKGNLE…LQDFFTTDPD (133 aa)) folds into the ADD domain. A GATA-type; atypical zinc finger spans residues 439–469 (RCLSCGKKNPVSFHPLFEGGLCQSCRDRFLE). Positions 440-532 (CLSCGKKNPV…LQEPWSCYMC (93 aa)) are interaction with the PRC2/EED-EZH2 complex. The segment at 480 to 536 (QSYCTVCCEGRELLLCSNTSCCRCFCVECLEVLVGAGTAEDAKLQEPWSCYMCLPQR) adopts a PHD-type; atypical zinc-finger fold. One can recognise an SAM-dependent MTase C5-type domain in the interval 581–859 (IRVLSLFDGI…APLKDYFACE (279 aa)). S-adenosyl-L-methionine-binding positions include 588 to 592 (DGIAT) and Glu-611. Lys-623 participates in a covalent cross-link: Glycyl lysine isopeptide (Lys-Gly) (interchain with G-Cter in SUMO2). Position 633-635 (633-635 (DVR)) interacts with S-adenosyl-L-methionine. Cys-657 is an active-site residue. 838–840 (RSW) provides a ligand contact to S-adenosyl-L-methionine.

Belongs to the class I-like SAM-binding methyltransferase superfamily. C5-methyltransferase family. In terms of assembly, interacts with CBX4, DNMT1, DNMT3A, SETDB1, UBE2I9, UBL1 and ZHX1. Interacts with SUV39H1 and BAZ2A/TIP5. Interacts with the PRC2/EED-EZH2 complex. Interacts with UHRF1. Sumoylated. In terms of processing, citrullinated by PADI4.

It localises to the nucleus. The enzyme catalyses a 2'-deoxycytidine in DNA + S-adenosyl-L-methionine = a 5-methyl-2'-deoxycytidine in DNA + S-adenosyl-L-homocysteine + H(+). Activated by binding to the regulatory factor DNMT3L. Required for genome-wide de novo methylation and is essential for the establishment of DNA methylation patterns during development. DNA methylation is coordinated with methylation of histones. May preferentially methylates nucleosomal DNA within the nucleosome core region. May function as transcriptional co-repressor by associating with CBX4 and independently of DNA methylation. Seems to be involved in gene silencing. In association with DNMT1 and via the recruitment of CTCFL/BORIS, involved in activation of BAG1 gene expression by modulating dimethylation of promoter histone H3 at H3K4 and H3K9. Functions as a transcriptional corepressor by associating with ZHX1. Required for DUX4 silencing in somatic cells. The protein is DNA (cytosine-5)-methyltransferase 3B (Dnmt3b) of Mus musculus (Mouse).